A 33-amino-acid chain; its full sequence is Pardaxin P-4 (33 aa).

Belongs to the pardaxin family. Monomer. In aqueous solution exists as a tetramer.

It is found in the secreted. The protein resides in the target cell membrane. In terms of biological role, exhibits unusual shark repellent and surfactant properties. Forms voltage-dependent, ion-permeable channels in membranes. At high concentration causes cell membrane lysis. In Pardachirus marmoratus (Finless sole), this protein is Pardaxin P-4.